Consider the following 479-residue polypeptide: Adenylate kinase 8 (479 aa).

Adenylate kinase stretches follow at residues 58–258 and 269–471; these read PKVV…TYVQ and PKVL…SGII. An ATP-binding site is contributed by 67-72; it reads ASGKTT. An NMP 1 region spans residues 87-113; sequence TKESLLEREFSRLSVEAKSYYQVYKKI. AMP contacts are provided by residues 140–143, Gln147, and Arg203; that span reads GIPE. The segment at 177–206 is LID 1; that stretch reads GKRIDPVTGEIYHTTFDWPPEPEIQNRLRQ. 278 to 283 lines the ATP pocket; that stretch reads GSGKRL. Residues 298-327 form an NMP 2 region; that stretch reads SCGQLLKEAVAAKSSFGELIQPFFEKRMTV. AMP contacts are provided by residues 325–327, 354–357, and Gln361; these read MTV and GFPR. An LID 2 region spans residues 391–424; sequence LRRTDPVTGERFHLMYKPPPTIEVQVRLLQNPKD. Arg392 provides a ligand contact to ATP.

It belongs to the adenylate kinase family. As to quaternary structure, interacts with CFAP45 and CFAP52; CFAP45 and AK8 dimerization may create a cavity at the interface of the dimer that can accommodate AMP.

Its subcellular location is the cytoplasm. It is found in the cytosol. It localises to the cytoskeleton. The protein localises to the cilium axoneme. It carries out the reaction AMP + ATP = 2 ADP. The catalysed reaction is a 2'-deoxyribonucleoside 5'-diphosphate + ATP = a 2'-deoxyribonucleoside 5'-triphosphate + ADP. It catalyses the reaction a ribonucleoside 5'-diphosphate + ATP = a ribonucleoside 5'-triphosphate + ADP. Functionally, nucleoside monophosphate (NMP) kinase that catalyzes the reversible transfer of the terminal phosphate group between nucleoside triphosphates and monophosphates. Has highest activity toward AMP, and weaker activity toward dAMP, CMP and dCMP. Also displays broad nucleoside diphosphate kinase activity. The chain is Adenylate kinase 8 (Ak8) from Mus musculus (Mouse).